The chain runs to 387 residues: Large ribosomal subunit protein uL3 (387 aa).

Residue S24 is modified to Phosphoserine. Residue K39 forms a Glycyl lysine isopeptide (Lys-Gly) (interchain with G-Cter in ubiquitin) linkage. T103 carries the post-translational modification Phosphothreonine. K136 is covalently cross-linked (Glycyl lysine isopeptide (Lys-Gly) (interchain with G-Cter in ubiquitin)). Phosphoserine is present on S156. H243 carries the post-translational modification Pros-methylhistidine. At S297 the chain carries Phosphoserine.

Belongs to the universal ribosomal protein uL3 family. Component of the large ribosomal subunit (LSU). Mature yeast ribosomes consist of a small (40S) and a large (60S) subunit. The 40S small subunit contains 1 molecule of ribosomal RNA (18S rRNA) and 33 different proteins (encoded by 57 genes). The large 60S subunit contains 3 rRNA molecules (25S, 5.8S and 5S rRNA) and 46 different proteins (encoded by 81 genes). uL3 forms together with ES39L one of the contact sites for the signal recognition particle that targets ribosomes to the endoplasmic reticulum membrane. In terms of processing, methylation at His-243 by HPM1 is required for proper 60S subunit assembly and promotes translational elongation fidelity.

Its subcellular location is the cytoplasm. Functionally, component of the ribosome, a large ribonucleoprotein complex responsible for the synthesis of proteins in the cell. The small ribosomal subunit (SSU) binds messenger RNAs (mRNAs) and translates the encoded message by selecting cognate aminoacyl-transfer RNA (tRNA) molecules. The large subunit (LSU) contains the ribosomal catalytic site termed the peptidyl transferase center (PTC), which catalyzes the formation of peptide bonds, thereby polymerizing the amino acids delivered by tRNAs into a polypeptide chain. The nascent polypeptides leave the ribosome through a tunnel in the LSU and interact with protein factors that function in enzymatic processing, targeting, and the membrane insertion of nascent chains at the exit of the ribosomal tunnel. uL3 plays a role in coordinating processes of accommodating the aminoacyl-tRNA in the PTC. This chain is Large ribosomal subunit protein uL3, found in Saccharomyces cerevisiae (strain ATCC 204508 / S288c) (Baker's yeast).